A 157-amino-acid chain; its full sequence is Urease accessory protein UreE (157 aa).

It belongs to the UreE family.

It localises to the cytoplasm. Involved in urease metallocenter assembly. Binds nickel. Probably functions as a nickel donor during metallocenter assembly. The protein is Urease accessory protein UreE of Corynebacterium glutamicum (strain R).